The sequence spans 284 residues: Bifunctional protein FolD 1 (284 aa).

NADP(+) contacts are provided by residues 166-168 (GAS) and Ile-232.

Belongs to the tetrahydrofolate dehydrogenase/cyclohydrolase family. In terms of assembly, homodimer.

It catalyses the reaction (6R)-5,10-methylene-5,6,7,8-tetrahydrofolate + NADP(+) = (6R)-5,10-methenyltetrahydrofolate + NADPH. The enzyme catalyses (6R)-5,10-methenyltetrahydrofolate + H2O = (6R)-10-formyltetrahydrofolate + H(+). It functions in the pathway one-carbon metabolism; tetrahydrofolate interconversion. Functionally, catalyzes the oxidation of 5,10-methylenetetrahydrofolate to 5,10-methenyltetrahydrofolate and then the hydrolysis of 5,10-methenyltetrahydrofolate to 10-formyltetrahydrofolate. This chain is Bifunctional protein FolD 1, found in Pseudomonas syringae pv. syringae (strain B728a).